Consider the following 327-residue polypeptide: uncharacterized protein (327 aa).

Positions 1 to 24 (MAMACLCLANISWATVCANSTGVA) are cleaved as a signal peptide.

This sequence belongs to the fimbrial protein family.

Its subcellular location is the fimbrium. Its function is as follows. Part of the sfmACDHF fimbrial operon. Could contribute to adhesion to various surfaces in specific environmental niches. Increases adhesion to eukaryotic T24 bladder epithelial cells in the absence of fim genes. This is an uncharacterized protein from Escherichia coli (strain K12).